Reading from the N-terminus, the 406-residue chain is NADH-ubiquinone oxidoreductase 49 kDa subunit (406 aa).

It belongs to the complex I 49 kDa subunit family. Complex I is composed of 45 different subunits. Component of the iron-sulfur (IP) fragment of the enzyme.

Its subcellular location is the mitochondrion inner membrane. The enzyme catalyses a ubiquinone + NADH + 5 H(+)(in) = a ubiquinol + NAD(+) + 4 H(+)(out). Functionally, core subunit of the mitochondrial membrane respiratory chain NADH dehydrogenase (Complex I) that is believed to belong to the minimal assembly required for catalysis. Complex I functions in the transfer of electrons from NADH to the respiratory chain. The immediate electron acceptor for the enzyme is believed to be ubiquinone. This chain is NADH-ubiquinone oxidoreductase 49 kDa subunit (nad7), found in Dictyostelium discoideum (Social amoeba).